The chain runs to 595 residues: MSQQTTASSEYLDESKTFSSFQLDLRLQQSLKSSGFHHPTLIQSSAIPLALEQKRDIIAKASTGSGKTLAYLIPVVQTILEHKSTQGADRTTGTLGVVLVPTRELAQQVRVVLEKLVLYCSKDIRLLNISANVDDSVLGPLLAENPEIIISTPSQLVKILEGKHLQTISLRDLRFLVIDEVDLILTFGYQEDLLKISQYLPLKKNLQAFLMSATLNEEIQELKTKFCRSPAILKLNDDEINKNKNKLLQYYVKVSEFDKFLLCYVIFKLSLIKGKTIIFVNTIDRGYRLKLVLEQFGIRSCILNSELPLNSRQHIVDEFNKNVYQLLIATDDNEYIEEEDEETVEAGEEGSEKLEEGGEKLEEITSKTSSTNGKQKIAKKDKEYGASRGVDFQNVSCVLNFDLPTTAKSYVHRIGRTARAGKSGTAISFVVPLKEYGKHKPSMLVTAKKDEKILARVIKQQSKLGFQIEPYNFDVKQIEGFRYRMEDGFRAVTQVAVREARVKELKQELLASEKLKRHFEENPHDLDSLRHDKELHPARVQQHLKRVPDYLLPEAARETGKKIGFVPFHNPKKNRKGKVAKRKPGRKSDPLKNFK.

The Q motif motif lies at 16-44 (KTFSSFQLDLRLQQSLKSSGFHHPTLIQS). The region spanning 48 to 233 (PLALEQKRDI…TKFCRSPAIL (186 aa)) is the Helicase ATP-binding domain. Residue 61–68 (ASTGSGKT) coordinates ATP. A DEAD box motif is present at residues 179–182 (DEVD). A Helicase C-terminal domain is found at 246–479 (KLLQYYVKVS…PYNFDVKQIE (234 aa)). Residues 340–349 (DEETVEAGEE) show a composition bias toward acidic residues. 2 disordered regions span residues 340–376 (DEETVEAGEEGSEKLEEGGEKLEEITSKTSSTNGKQK) and 562–595 (KIGFVPFHNPKKNRKGKVAKRKPGRKSDPLKNFK). The segment covering 350–365 (GSEKLEEGGEKLEEIT) has biased composition (basic and acidic residues). Residues 570-585 (NPKKNRKGKVAKRKPG) show a composition bias toward basic residues. The segment covering 586-595 (RKSDPLKNFK) has biased composition (basic and acidic residues).

Belongs to the DEAD box helicase family. DDX56/DBP9 subfamily.

Its subcellular location is the nucleus. It localises to the nucleolus. It catalyses the reaction ATP + H2O = ADP + phosphate + H(+). In terms of biological role, ATP-binding RNA helicase involved in the biogenesis of 60S ribosomal subunits and is required for the normal formation of 25S and 5.8S rRNAs. This is ATP-dependent RNA helicase DBP9 (DBP9) from Eremothecium gossypii (strain ATCC 10895 / CBS 109.51 / FGSC 9923 / NRRL Y-1056) (Yeast).